A 423-amino-acid polypeptide reads, in one-letter code: UDP-N-acetylglucosamine 1-carboxyvinyltransferase 2 (423 aa).

Residue 23–24 coordinates phosphoenolpyruvate; the sequence is KN. Position 93 (Arg-93) interacts with UDP-N-acetyl-alpha-D-glucosamine. Catalysis depends on Cys-117, which acts as the Proton donor. At Cys-117 the chain carries 2-(S-cysteinyl)pyruvic acid O-phosphothioketal. UDP-N-acetyl-alpha-D-glucosamine-binding positions include 122 to 126, Asp-305, and Ile-327; that span reads RPIDQ.

The protein belongs to the EPSP synthase family. MurA subfamily.

Its subcellular location is the cytoplasm. It carries out the reaction phosphoenolpyruvate + UDP-N-acetyl-alpha-D-glucosamine = UDP-N-acetyl-3-O-(1-carboxyvinyl)-alpha-D-glucosamine + phosphate. Its pathway is cell wall biogenesis; peptidoglycan biosynthesis. In terms of biological role, cell wall formation. Adds enolpyruvyl to UDP-N-acetylglucosamine. This is UDP-N-acetylglucosamine 1-carboxyvinyltransferase 2 from Listeria innocua serovar 6a (strain ATCC BAA-680 / CLIP 11262).